Here is a 328-residue protein sequence, read N- to C-terminus: DNA-directed RNA polymerase subunit alpha (328 aa).

Positions 1 to 232 are alpha N-terminal domain (alpha-NTD); sequence MSTQGFLKPR…DQISVFAALE (232 aa). The interval 248–328 is alpha C-terminal domain (alpha-CTD); it reads IDPVLLRPVD…NWPPLGLERP (81 aa).

This sequence belongs to the RNA polymerase alpha chain family. As to quaternary structure, homodimer. The RNAP catalytic core consists of 2 alpha, 1 beta, 1 beta' and 1 omega subunit. When a sigma factor is associated with the core the holoenzyme is formed, which can initiate transcription.

It catalyses the reaction RNA(n) + a ribonucleoside 5'-triphosphate = RNA(n+1) + diphosphate. In terms of biological role, DNA-dependent RNA polymerase catalyzes the transcription of DNA into RNA using the four ribonucleoside triphosphates as substrates. This is DNA-directed RNA polymerase subunit alpha from Bordetella petrii (strain ATCC BAA-461 / DSM 12804 / CCUG 43448).